The following is a 189-amino-acid chain: Elongation factor P (189 aa).

Lysine 34 is modified (N6-(3,6-diaminohexanoyl)-5-hydroxylysine).

Belongs to the elongation factor P family. Post-translationally, may be beta-lysylated on the epsilon-amino group of Lys-34 by the combined action of EpmA and EpmB, and then hydroxylated on the C5 position of the same residue by EpmC (if this protein is present). Lysylation is critical for the stimulatory effect of EF-P on peptide-bond formation. The lysylation moiety may extend toward the peptidyltransferase center and stabilize the terminal 3-CCA end of the tRNA. Hydroxylation of the C5 position on Lys-34 may allow additional potential stabilizing hydrogen-bond interactions with the P-tRNA.

The protein resides in the cytoplasm. It participates in protein biosynthesis; polypeptide chain elongation. Involved in peptide bond synthesis. Alleviates ribosome stalling that occurs when 3 or more consecutive Pro residues or the sequence PPG is present in a protein, possibly by augmenting the peptidyl transferase activity of the ribosome. Modification of Lys-34 is required for alleviation. The sequence is that of Elongation factor P from Teredinibacter turnerae (strain ATCC 39867 / T7901).